The chain runs to 638 residues: Growth hormone receptor (638 aa).

Residues 1-18 form the signal peptide; the sequence is MDLWQLLLTLALAGSSDA. At 19 to 264 the chain is on the extracellular side; it reads FSGSEPTAAI…NQFTCEEDFY (246 aa). A glycan (N-linked (GlcNAc...) asparagine) is linked at Asn46. Intrachain disulfides connect Cys56/Cys66 and Cys101/Cys112. A glycan (N-linked (GlcNAc...) asparagine) is linked at Asn115. A disulfide bridge links Cys126 with Cys140. In terms of domain architecture, Fibronectin type-III spans 151–254; the sequence is PPIALNWTLL…EVLYVTLPQM (104 aa). 3 N-linked (GlcNAc...) asparagine glycosylation sites follow: Asn156, Asn161, and Asn200. The WSXWS motif motif lies at 240-244; sequence YGEFS. Residues 265–288 form a helical membrane-spanning segment; the sequence is FPWLLIIIFGIFGLTVMLFVFLFS. The Cytoplasmic portion of the chain corresponds to 289–638; the sequence is KQQRIKMLIL…STDQLNKIMP (350 aa). Residues 294–379 are required for JAK2 binding; sequence KMLILPPVPV…HQKSHSNLGV (86 aa). A Box 1 motif motif is present at residues 297-305; that stretch reads ILPPVPVPK. The short motif at 340–349 is the UbE motif element; it reads DSWVEFIELD. A Phosphoserine modification is found at Ser341. The disordered stretch occupies residues 353 to 388; it reads PDEKNEGSDTDRLLSSDHQKSHSNLGVKDGDSGRTS. Over residues 356–372 the composition is skewed to basic and acidic residues; it reads KNEGSDTDRLLSSDHQK. Phosphotyrosine occurs at positions 487 and 595.

It belongs to the type I cytokine receptor family. Type 1 subfamily. As to quaternary structure, on growth hormone (GH) binding, forms homodimers and binds JAK2 via a box 1-containing domain. In terms of processing, the soluble form (GHBP) is produced by phorbol ester-promoted proteolytic cleavage at the cell surface (shedding) by ADAM17/TACE. Shedding is inhibited by growth hormone (GH) binding to the receptor probably due to a conformational change in GHR rendering the receptor inaccessible to ADAM17. Post-translationally, on GH binding, phosphorylated on tyrosine residues in the cytoplasmic domain by JAK2. Ubiquitinated by the ECS(SOCS2) complex following ligand-binding and phosphorylation by JAK2, leading to its degradation by the proteasome. Regulation by the ECS(SOCS2) complex acts as a negative feedback loop of growth hormone receptor signaling. Ubiquitination is not sufficient for GHR internalization.

The protein localises to the cell membrane. It localises to the secreted. Its function is as follows. Receptor for pituitary gland growth hormone (GH1) involved in regulating postnatal body growth. On ligand binding, couples to the JAK2/STAT5 pathway. In terms of biological role, the soluble form (GHBP) acts as a reservoir of growth hormone in plasma and may be a modulator/inhibitor of GH signaling. The chain is Growth hormone receptor (GHR) from Papio anubis (Olive baboon).